Reading from the N-terminus, the 947-residue chain is Protein translocase subunit SecA 1 (947 aa).

ATP-binding positions include Q87, 105-109 (GEGKT), and D525. Positions 907–937 (DDADKAARDPNRPETWGKVGRNEDCPCNSGK) are disordered. A compositionally biased stretch (basic and acidic residues) spans 908 to 918 (DADKAARDPNR). The Zn(2+) site is built by C931, C933, C942, and H943.

This sequence belongs to the SecA family. In terms of assembly, monomer and homodimer. Part of the essential Sec protein translocation apparatus which comprises SecA, SecYEG and auxiliary proteins SecDF-YajC and YidC. Zn(2+) serves as cofactor.

The protein resides in the cell inner membrane. It is found in the cytoplasm. The enzyme catalyses ATP + H2O + cellular proteinSide 1 = ADP + phosphate + cellular proteinSide 2.. In terms of biological role, part of the Sec protein translocase complex. Interacts with the SecYEG preprotein conducting channel. Has a central role in coupling the hydrolysis of ATP to the transfer of proteins into and across the cell membrane, serving both as a receptor for the preprotein-SecB complex and as an ATP-driven molecular motor driving the stepwise translocation of polypeptide chains across the membrane. This chain is Protein translocase subunit SecA 1, found in Rhodopseudomonas palustris (strain BisA53).